Reading from the N-terminus, the 333-residue chain is ASDCMFGNGKGYRGKKATTVMGIPCQEWAAQEPHRHSIFTPETNPQAGLEKNYCRNPDGDVNGPWCYTMNQRKLFDYCDVPQCVSTSFDCGKPQVEPKKCPGRVVGGCVANPHSWPWQISLRTRYGKHFCGGTLISPEWVLTAAHCLERSSRPASYKVILGAHKEVNLESDVQEIEVYKLFLEPTRADIALLKLSSPAVITSKVIPACLPPPNYVVADRTLCYITGWGETQGTYGAGLLKEAQLPVIENKVCNRYEYLNGRVKSTELCAGNLAGGTDSCQGDSGGPLVCFEKDKYILQGVTSWGLGCARPNKPGVYVRVSRFVTWIEGIMRNN.

The region spanning 4–83 (CMFGNGKGYR…LFDYCDVPQC (80 aa)) is the Kringle 5 domain. 9 cysteine pairs are disulfide-bonded: Cys4-Cys83, Cys25-Cys66, Cys54-Cys78, Cys90-Cys208, Cys100-Cys108, Cys130-Cys146, Cys222-Cys289, Cys252-Cys268, and Cys279-Cys307. Residues 104-331 (VVGGCVANPH…FVTWIEGIMR (228 aa)) form the Peptidase S1 domain. Position 120 is a phosphoserine (Ser120). Catalysis depends on charge relay system residues His145 and Asp188. The Charge relay system role is filled by Ser283.

The protein belongs to the peptidase S1 family. Plasminogen subfamily. In terms of assembly, interacts with CSPG4 and AMOT. Interacts (via the Kringle domains) with HRG; the interaction tethers PLG to the cell surface and enhances its activation. Interacts (via Kringle 4 domain) with ADA; the interaction stimulates PLG activation when in complex with DPP4. Angiostatin: Interacts with ATP5F1A; the interaction inhibits most of the angiogenic effects of angiostatin.

It localises to the secreted. It catalyses the reaction Preferential cleavage: Lys-|-Xaa &gt; Arg-|-Xaa, higher selectivity than trypsin. Converts fibrin into soluble products.. Its activity is regulated as follows. Converted into plasmin by plasminogen activators, both plasminogen and its activator being bound to fibrin. Activated with urokinase and high concentrations of streptokinase. Its function is as follows. Plasmin dissolves the fibrin of blood clots and acts as a proteolytic factor in a variety of other processes including embryonic development, tissue remodeling, tumor invasion, and inflammation. In ovulation, weakens the walls of the Graafian follicle. It activates the urokinase-type plasminogen activator, collagenases and several complement zymogens, such as C1, C4 and C5. Cleavage of fibronectin and laminin leads to cell detachment and apoptosis. Also cleaves fibrin, thrombospondin and von Willebrand factor. Its role in tissue remodeling and tumor invasion may be modulated by CSPG4. Binds to cells. This chain is Plasminogen (PLG), found in Canis lupus familiaris (Dog).